The sequence spans 25 residues: Small ribosomal subunit protein uS19 (25 aa).

The segment at 1 to 25 (GHKLGEFAPTRTFRGHKKEDKKVKR) is disordered.

This sequence belongs to the universal ribosomal protein uS19 family.

Functionally, protein S19 forms a complex with S13 that binds strongly to the 16S ribosomal RNA. This chain is Small ribosomal subunit protein uS19 (rpsS), found in Acholeplasma laidlawii.